The primary structure comprises 477 residues: 3-isopropylmalate dehydratase large subunit (477 aa).

[4Fe-4S] cluster-binding residues include cysteine 347, cysteine 407, and cysteine 410. The segment at 418 to 442 is disordered; the sequence is LAPGERSASTSNRNFEGRQGKGGRT.

This sequence belongs to the aconitase/IPM isomerase family. LeuC type 1 subfamily. As to quaternary structure, heterodimer of LeuC and LeuD. The cofactor is [4Fe-4S] cluster.

The enzyme catalyses (2R,3S)-3-isopropylmalate = (2S)-2-isopropylmalate. It participates in amino-acid biosynthesis; L-leucine biosynthesis; L-leucine from 3-methyl-2-oxobutanoate: step 2/4. Its function is as follows. Catalyzes the isomerization between 2-isopropylmalate and 3-isopropylmalate, via the formation of 2-isopropylmaleate. This chain is 3-isopropylmalate dehydratase large subunit, found in Streptomyces avermitilis (strain ATCC 31267 / DSM 46492 / JCM 5070 / NBRC 14893 / NCIMB 12804 / NRRL 8165 / MA-4680).